Consider the following 134-residue polypeptide: UPF0299 membrane protein KPK_1586 (134 aa).

The next 4 membrane-spanning stretches (helical) occupy residues 5-25 (LTII…LYAG), 26-46 (IFIA…MLIL), 66-86 (ILIR…MQYW), and 93-113 (LGPV…VVSW).

It belongs to the UPF0299 family.

It is found in the cell inner membrane. In Klebsiella pneumoniae (strain 342), this protein is UPF0299 membrane protein KPK_1586.